Here is a 683-residue protein sequence, read N- to C-terminus: Probable metal-nicotianamine transporter YSL3 (683 aa).

14 helical membrane passes run leucine 29–glycine 49, isoleucine 58–isoleucine 78, methionine 97–threonine 117, histidine 142–isoleucine 162, valine 204–tyrosine 224, isoleucine 265–leucine 285, valine 309–threonine 329, isoleucine 372–isoleucine 392, leucine 404–leucine 424, proline 448–serine 468, threonine 490–phenylalanine 510, cysteine 553–valine 573, phenylalanine 595–tryptophan 615, and serine 628–leucine 648.

The protein belongs to the YSL (TC 2.A.67.2) family.

The protein resides in the membrane. Its function is as follows. May be involved in the transport of nicotianamine-chelated metals. This chain is Probable metal-nicotianamine transporter YSL3 (YSL3), found in Oryza sativa subsp. japonica (Rice).